The sequence spans 252 residues: Phosphate import ATP-binding protein PstB 1 (252 aa).

One can recognise an ABC transporter domain in the interval Leu-6–Ile-247. Residue Gly-38–Ser-45 coordinates ATP.

It belongs to the ABC transporter superfamily. Phosphate importer (TC 3.A.1.7) family. The complex is composed of two ATP-binding proteins (PstB), two transmembrane proteins (PstC and PstA) and a solute-binding protein (PstS).

The protein resides in the cell membrane. The catalysed reaction is phosphate(out) + ATP + H2O = ADP + 2 phosphate(in) + H(+). In terms of biological role, part of the ABC transporter complex PstSACB involved in phosphate import. Responsible for energy coupling to the transport system. This is Phosphate import ATP-binding protein PstB 1 from Streptococcus pneumoniae (strain ATCC BAA-255 / R6).